The primary structure comprises 146 residues: MKIYVDADACPVKDVIIFEATNAEIPVTLVTSFSHYSNAEQPKGVETIYVDSGADAADYRIMQLAKKEDLIVTQDYGLASLALAKGCIVLHHKGYKYTNDNIEQLLQTRYLSAMVRKSGKRTKGPKPFTAEDKEKFRALFKSMIAL.

Belongs to the UPF0178 family.

The protein is UPF0178 protein BC_3040 of Bacillus cereus (strain ATCC 14579 / DSM 31 / CCUG 7414 / JCM 2152 / NBRC 15305 / NCIMB 9373 / NCTC 2599 / NRRL B-3711).